Here is a 330-residue protein sequence, read N- to C-terminus: PDZ and LIM domain protein 4 (330 aa).

The PDZ domain maps to 1 to 84 (MPHSVTLRGP…HLTLSVSRPE (84 aa)). Residues 104–180 (IDPEIQDGSP…DPARGLPRSR (77 aa)) form a disordered region. A compositionally biased stretch (low complexity) spans 111-121 (GSPTTSRRPSG). A phosphoserine mark is found at S112, S116, S120, and S135. Residues 148–163 (NGSSEATLPAQMSTLH) show a composition bias toward polar residues. The LIM zinc-binding domain occupies 253 to 312 (PECTRCGHGIVGTIVKARDKLYHPECFMCSDCGLNLKQRGYFFLDERLYCESHAKARVKP).

Homodimer. Interacts with PTPN13. Interacts (via C-terminus only or via combined C-terminus and LIM domain, but not LIM domain only) with PTPN13 (via the second or fourth PDZ domains). Found in a complex with PTPN13 and TRIP6. Interacts (via PDZ domain) with ACTN1 and ACTN2 (via C-terminal SDL residues). Interacts (via PDZ domain) with TRIP6 (via the second LIM domain or via the third LIM domain plus C-terminus). Interacts (via LIM domain) with GRIA1 (via C-terminus); this interaction as well as the interaction with alpha-actinin is required for their colocalization in early endosomes. Interacts with PDLIM1. Forms (via LIM domain) a heterodimer with PDLIM3. Interacts directly with SRC (via kinase domain and to a lesser extent the SH2 domain). Isoform 2 interacts with NQO1. NQO1-stabilized isoform 2 heterodimerizes with isoform 1. Post-translationally, phosphorylated on tyrosine residue(s). Can be dephosphorylated by PTPN13. In terms of tissue distribution, found in brain.

The protein localises to the cytoplasm. It is found in the cytoskeleton. It localises to the nucleus. Its subcellular location is the perinuclear region. The protein resides in the cell projection. The protein localises to the lamellipodium. It is found in the dendritic spine. It localises to the early endosome membrane. Its subcellular location is the recycling endosome membrane. The protein resides in the synapse. The protein localises to the synaptosome. Its function is as follows. Suppresses SRC activation by recognizing and binding to active SRC and facilitating PTPN13-mediated dephosphorylation of SRC 'Tyr-419' leading to its inactivation. Inactivated SRC dissociates from this protein allowing the initiation of a new SRC inactivation cycle. Involved in reorganization of the actin cytoskeleton. In nonmuscle cells, binds to ACTN1 (alpha-actinin-1), increases the affinity of ACTN1 to F-actin (filamentous actin), and promotes formation of actin stress fibers. Involved in regulation of the synaptic AMPA receptor transport in dendritic spines of hippocampal pyramidal neurons directing the receptors toward an insertion at the postsynaptic membrane. Links endosomal surface-internalized GRIA1-containing AMPA receptors to the alpha-actinin/actin cytoskeleton. Increases AMPA receptor-mediated excitatory postsynaptic currents in neurons. Functionally, involved in reorganization of the actin cytoskeleton and in regulation of cell migration. In response to oxidative stress, binds to NQO1, which stabilizes it and protects it from ubiquitin-independent degradation by the core 20S proteasome. Stabilized protein is able to heterodimerize with isoform 1 changing the subcellular location of it from cytoskeleton and nuclei to cytosol, leading to loss of isoforms 1 ability to induce formation of actin stress fibers. Counteracts the effects produced by isoform 1 on organization of actin cytoskeleton and cell motility to fine-tune actin cytoskeleton rearrangement and to attenuate cell migration. This Homo sapiens (Human) protein is PDZ and LIM domain protein 4 (PDLIM4).